The following is a 708-amino-acid chain: B-cell lymphoma 6 protein homolog (708 aa).

The BTB domain occupies 32 to 99 (TDVVIIVNRE…MYTSRLNLRE (68 aa)). The segment covering 303 to 317 (AKEEERTSSEDEISQ) has biased composition (basic and acidic residues). 2 disordered regions span residues 303–371 (AKEE…KSPT) and 431–470 (PTKMSVNGEDSNIPQASRLNNIVNRSRDGSPRSSEGQSPL). Polar residues-rich tracts occupy residues 333–370 (SPQSPQKSDCQPNSPTESSSSKNARISQNSNSLFTKSP) and 431–454 (PTKMSVNGEDSNIPQASRLNNIVN). 6 consecutive C2H2-type zinc fingers follow at residues 520-543 (FFCNECDCRFSEEASLKRHSLQVH), 548-570 (YKCDRCQASFRYKGNLASHKTVH), 576-598 (YRCNICGAQFNRPANLKTHTRIH), 604-626 (YKCETCGARFVQVAHLRAHVLIH), 632-654 (YPCEICGTRFRHLQTLKSHLRIH), and 660-683 (YHCEKCNLHFRHKSQLRLHLRQKH).

Its subcellular location is the nucleus. Transcriptional repressor mainly required for germinal center (GC) formation and antibody affinity maturation which has different mechanisms of action specific to the lineage and biological functions. Forms complexes with different corepressors and histone deacetylases to repress the transcriptional expression of different subsets of target genes. Represses its target genes by binding directly to the DNA sequence 5'-TTCCTAGAA-3' (BCL6-binding site) or indirectly by repressing the transcriptional activity of transcription factors. In GC B-cells, represses genes that function in differentiation, inflammation, apoptosis and cell cycle control, also autoregulates its transcriptional expression and up-regulates, indirectly, the expression of some genes important for GC reactions, such as AICDA, through the repression of microRNAs expression. An important function is to allow GC B-cells to proliferate very rapidly in response to T-cell dependent antigens and tolerate the physiological DNA breaks required for immunglobulin class switch recombination and somatic hypermutation without inducing a p53/TP53-dependent apoptotic response. In follicular helper CD4(+) T-cells (T(FH) cells), promotes the expression of T(FH)-related genes but inhibits the differentiation of T(H)1, T(H)2 and T(H)17 cells. Also required for the establishment and maintenance of immunological memory for both T- and B-cells. Suppresses macrophage proliferation through competition with STAT5 for STAT-binding motifs binding on certain target genes, such as CCL2 and CCND2. In response to genotoxic stress, controls cell cycle arrest in GC B-cells in both p53/TP53-dependedent and -independent manners. Besides, also controls neurogenesis through the alteration of the composition of NOTCH-dependent transcriptional complexes at selective NOTCH targets, such as HES5, including the recruitment of the deacetylase SIRT1 and resulting in an epigenetic silencing leading to neuronal differentiation. This Gallus gallus (Chicken) protein is B-cell lymphoma 6 protein homolog.